A 211-amino-acid chain; its full sequence is Metalloproteinase inhibitor 3 (211 aa).

Positions 1–23 (MTPWLGLIVLLGSWSLGDWGAEA) are cleaved as a signal peptide. Cys-24 contacts Zn(2+). Involved in metalloproteinase-binding regions lie at residues 24-27 (CTCS) and 88-89 (ES). 6 disulfides stabilise this stretch: Cys-24–Cys-91, Cys-26–Cys-118, Cys-36–Cys-143, Cys-145–Cys-192, Cys-150–Cys-155, and Cys-163–Cys-184. The region spanning 24-143 (CTCSPSHPQD…GLNYRYHLGC (120 aa)) is the NTR domain. The interval 105–188 (TGRVYDGKMY…SKHYACIRQK (84 aa)) is mediates interaction with EFEMP1. An N-linked (GlcNAc...) asparagine glycan is attached at Asn-207.

It belongs to the protease inhibitor I35 (TIMP) family. Interacts with EFEMP1. Interacts with KDR.

Its subcellular location is the secreted. It localises to the extracellular space. The protein resides in the extracellular matrix. Mediates a variety of processes including matrix regulation and turnover, inflammation, and angiogenesis, through reversible inhibition of zinc protease superfamily enzymes, primarily matrix metalloproteinases (MMPs). Regulates extracellular matrix (ECM) remodeling through inhibition of matrix metalloproteinases (MMP) including MMP-1, MMP-2, MMP-3, MMP-7, MMP-9, MMP-13, MMP-14 and MMP-15. Additionally, modulates the processing of amyloid precursor protein (APP) and apolipoprotein E receptor ApoER2 by inhibiting two alpha-secretases ADAM10 and ADAM17. Functions as a tumor suppressor and a potent inhibitor of angiogenesis. Exerts its anti-angiogenic effect by directly interacting with vascular endothelial growth factor (VEGF) receptor-2/KDR, preventing its binding to the VEGFA ligand. Selectively induces apoptosis in angiogenic endothelial cells through a caspase-independent cell death pathway. Mechanistically, inhibits matrix-induced focal adhesion kinase PTK2 tyrosine phosphorylation and association with paxillin/PXN and disrupts the incorporation of ITGB3, PTK2 and PXN into focal adhesion contacts on the matrix. In Macaca mulatta (Rhesus macaque), this protein is Metalloproteinase inhibitor 3 (TIMP3).